The sequence spans 66 residues: 14-3-3-like protein 2 (66 aa).

It belongs to the 14-3-3 family.

This chain is 14-3-3-like protein 2, found in Pseudotsuga menziesii (Douglas-fir).